Reading from the N-terminus, the 198-residue chain is N-acetyltransferase 9-like protein (198 aa).

The N-acetyltransferase domain maps to 14–186; it reads IILVPYKEKH…SNNFTNLTAD (173 aa).

Belongs to the acetyltransferase family. GNAT subfamily.

The protein is N-acetyltransferase 9-like protein (nat9) of Nematostella vectensis (Starlet sea anemone).